Here is a 210-residue protein sequence, read N- to C-terminus: Large ribosomal subunit protein uL3 (210 aa).

Residues 122-155 (NQKRNNFGRGPMSHGSKNHRAPGSIGAGTTPGRV) form a disordered region.

Belongs to the universal ribosomal protein uL3 family. Part of the 50S ribosomal subunit. Forms a cluster with proteins L14 and L19.

One of the primary rRNA binding proteins, it binds directly near the 3'-end of the 23S rRNA, where it nucleates assembly of the 50S subunit. The sequence is that of Large ribosomal subunit protein uL3 from Nostoc punctiforme (strain ATCC 29133 / PCC 73102).